The following is a 213-amino-acid chain: RNA pyrophosphohydrolase (213 aa).

The Nudix hydrolase domain maps to 6 to 149 (GFRPNVGIVL…KRGVYEIALT (144 aa)). The short motif at 38-59 (GGIDRGETPEQAMIRELHEEVG) is the Nudix box element. Residues 185–213 (NFELPPGGSFEPNPQTSYGLDASGKPHET) form a disordered region.

The protein belongs to the Nudix hydrolase family. RppH subfamily. Requires a divalent metal cation as cofactor.

Its function is as follows. Accelerates the degradation of transcripts by removing pyrophosphate from the 5'-end of triphosphorylated RNA, leading to a more labile monophosphorylated state that can stimulate subsequent ribonuclease cleavage. The chain is RNA pyrophosphohydrolase from Albidiferax ferrireducens (strain ATCC BAA-621 / DSM 15236 / T118) (Rhodoferax ferrireducens).